We begin with the raw amino-acid sequence, 270 residues long: Acyl-[acyl-carrier-protein]--UDP-N-acetylglucosamine O-acyltransferase (270 aa).

Substrate-binding positions include 69-72 (QDLK), His121, His140, and Gln157.

This sequence belongs to the transferase hexapeptide repeat family. LpxA subfamily. As to quaternary structure, homotrimer.

The protein resides in the cytoplasm. The catalysed reaction is a (3R)-hydroxyacyl-[ACP] + UDP-N-acetyl-alpha-D-glucosamine = a UDP-3-O-[(3R)-3-hydroxyacyl]-N-acetyl-alpha-D-glucosamine + holo-[ACP]. It participates in glycolipid biosynthesis; lipid IV(A) biosynthesis; lipid IV(A) from (3R)-3-hydroxytetradecanoyl-[acyl-carrier-protein] and UDP-N-acetyl-alpha-D-glucosamine: step 1/6. Its function is as follows. Involved in the biosynthesis of lipid A, a phosphorylated glycolipid that anchors the lipopolysaccharide to the outer membrane of the cell. This is Acyl-[acyl-carrier-protein]--UDP-N-acetylglucosamine O-acyltransferase from Helicobacter pylori (strain ATCC 700392 / 26695) (Campylobacter pylori).